Reading from the N-terminus, the 385-residue chain is UPF0744 protein YSD83 (385 aa).

Belongs to the UPF0744 family.

This chain is UPF0744 protein YSD83 (YSD83), found in Saccharomyces paradoxus (Yeast).